Consider the following 508-residue polypeptide: DASH complex subunit ASK1 (508 aa).

2 disordered regions span residues 86 to 138 (LVDG…TLSS) and 150 to 355 (SRAA…QLRS). Residues 116–138 (EPSQYTPRPQTSAGGHDTTTLSS) are compositionally biased toward polar residues. Over residues 161–175 (QHHDDSSVLTDRDGD) the composition is skewed to basic and acidic residues. Acidic residues predominate over residues 201–213 (DEMDIDMDEEDSE). The span at 229-238 (RYYDDDHGFE) shows a compositional bias: basic and acidic residues. Residues 239–258 (QGEEEEDEEEEEEEEEEEEG) show a composition bias toward acidic residues. Over residues 326–338 (IKQEDTEKKRPLW) the composition is skewed to basic and acidic residues.

The protein belongs to the DASH complex ASK1 family. As to quaternary structure, component of the DASH complex consisting of ASK1, DAD1, DAD2, DAD3, DAD4, DAM1, DUO1, HSK3, SPC19 and SPC34, with a stoichiometry of one copy of each subunit per complex. Multiple DASH complexes oligomerize to form a ring that encircles spindle microtubules and organizes the rod-like NDC80 complexes of the outer kinetochore. On cytoplasmic microtubules, DASH complexes appear to form patches instead of rings.

The protein resides in the chromosome. It is found in the centromere. Its subcellular location is the kinetochore. The protein localises to the cytoplasm. It localises to the cytoskeleton. The protein resides in the spindle. It is found in the nucleus. Functionally, component of the DASH complex that connects microtubules with kinetochores and couples microtubule depolymerisation to chromosome movement; it is involved in retrieving kinetochores to the spindle poles before their re-orientation on the spindle in early mitosis and allows microtubule depolymerization to pull chromosomes apart and resist detachment during anaphase. Kinetochores, consisting of a centromere-associated inner segment and a microtubule-contacting outer segment, play a crucial role in chromosome segregation by mediating the physical connection between centromeric DNA and microtubules. Kinetochores also serve as an input point for the spindle assembly checkpoint, which delays anaphase until all chromosomes have bioriented on the mitotic spindle. The polypeptide is DASH complex subunit ASK1 (Chaetomium thermophilum (strain DSM 1495 / CBS 144.50 / IMI 039719) (Thermochaetoides thermophila)).